We begin with the raw amino-acid sequence, 198 residues long: Superoxide dismutase [Mn], mitochondrial (198 aa).

A Mn(2+)-binding site is contributed by H26. Y34 is subject to 3'-nitrotyrosine. An N6-acetyllysine; alternate mark is found at K44 and K51. Residues K44 and K51 each carry the N6-succinyllysine; alternate modification. H74 provides a ligand contact to Mn(2+). At K90 the chain carries N6-acetyllysine. Residues K98 and K106 each carry the N6-acetyllysine; alternate modification. An N6-succinyllysine; alternate mark is found at K98 and K106. Positions 159 and 163 each coordinate Mn(2+). The residue at position 178 (K178) is an N6-acetyllysine.

It belongs to the iron/manganese superoxide dismutase family. In terms of assembly, homotetramer. Mn(2+) is required as a cofactor. Nitrated under oxidative stress. Nitration coupled with oxidation inhibits the catalytic activity. Post-translationally, acetylation at Lys-98 decreases enzymatic activity. Deacetylated by SIRT3 upon exposure to ionizing radiations or after long fasting. In terms of processing, polyubiquitinated; leading to proteasomal degradation. Deubiquitinated by USP36 which increases protein stability.

It localises to the mitochondrion matrix. The enzyme catalyses 2 superoxide + 2 H(+) = H2O2 + O2. Destroys superoxide anion radicals which are normally produced within the cells and which are toxic to biological systems. In Callithrix jacchus (White-tufted-ear marmoset), this protein is Superoxide dismutase [Mn], mitochondrial (SOD2).